The chain runs to 404 residues: Cysteine desulfurase IscS (404 aa).

Pyridoxal 5'-phosphate is bound by residues 75 to 76 (AT), asparagine 155, glutamine 183, and 203 to 205 (SAH). Lysine 206 carries the N6-(pyridoxal phosphate)lysine modification. Threonine 243 contacts pyridoxal 5'-phosphate. The active-site Cysteine persulfide intermediate is the cysteine 328. A [2Fe-2S] cluster-binding site is contributed by cysteine 328.

This sequence belongs to the class-V pyridoxal-phosphate-dependent aminotransferase family. NifS/IscS subfamily. As to quaternary structure, homodimer. Forms a heterotetramer with IscU, interacts with other sulfur acceptors. The cofactor is pyridoxal 5'-phosphate.

Its subcellular location is the cytoplasm. The catalysed reaction is (sulfur carrier)-H + L-cysteine = (sulfur carrier)-SH + L-alanine. The protein operates within cofactor biosynthesis; iron-sulfur cluster biosynthesis. Functionally, master enzyme that delivers sulfur to a number of partners involved in Fe-S cluster assembly, tRNA modification or cofactor biosynthesis. Catalyzes the removal of elemental sulfur atoms from cysteine to produce alanine. Functions as a sulfur delivery protein for Fe-S cluster synthesis onto IscU, an Fe-S scaffold assembly protein, as well as other S acceptor proteins. The sequence is that of Cysteine desulfurase IscS from Neisseria meningitidis serogroup C / serotype 2a (strain ATCC 700532 / DSM 15464 / FAM18).